Reading from the N-terminus, the 182-residue chain is Probable RNA 2'-phosphotransferase (182 aa).

The protein belongs to the KptA/TPT1 family.

Functionally, removes the 2'-phosphate from RNA via an intermediate in which the phosphate is ADP-ribosylated by NAD followed by a presumed transesterification to release the RNA and generate ADP-ribose 1''-2''-cyclic phosphate (APPR&gt;P). May function as an ADP-ribosylase. In Pseudomonas aeruginosa (strain UCBPP-PA14), this protein is Probable RNA 2'-phosphotransferase.